The chain runs to 369 residues: 3-dehydroquinate synthase (369 aa).

NAD(+) contacts are provided by residues 71-76 (DGECHK), 105-109 (GVIND), 129-130 (TT), Lys142, Lys151, and 169-172 (TLST). Residues Glu184, His247, and His264 each contribute to the Zn(2+) site.

The protein belongs to the sugar phosphate cyclases superfamily. Dehydroquinate synthase family. Co(2+) is required as a cofactor. The cofactor is Zn(2+). NAD(+) serves as cofactor.

The protein localises to the cytoplasm. The enzyme catalyses 7-phospho-2-dehydro-3-deoxy-D-arabino-heptonate = 3-dehydroquinate + phosphate. Its pathway is metabolic intermediate biosynthesis; chorismate biosynthesis; chorismate from D-erythrose 4-phosphate and phosphoenolpyruvate: step 2/7. Catalyzes the conversion of 3-deoxy-D-arabino-heptulosonate 7-phosphate (DAHP) to dehydroquinate (DHQ). The chain is 3-dehydroquinate synthase from Dichelobacter nodosus (strain VCS1703A).